A 141-amino-acid polypeptide reads, in one-letter code: HTH-type transcriptional repressor NsrR (141 aa).

The HTH rrf2-type domain maps to 2-129 (QLTNFTDYGL…DNYTLADLVE (128 aa)). The segment at residues 28–51 (ISEVTDVYGVSRNHMVKIINQLSR) is a DNA-binding region (H-T-H motif). [2Fe-2S] cluster contacts are provided by cysteine 91, cysteine 96, and cysteine 102.

Requires [2Fe-2S] cluster as cofactor.

Nitric oxide-sensitive repressor of genes involved in protecting the cell against nitrosative stress. May require iron for activity. This Shigella boydii serotype 18 (strain CDC 3083-94 / BS512) protein is HTH-type transcriptional repressor NsrR.